The primary structure comprises 103 residues: Putative membrane protein insertion efficiency factor (103 aa).

The protein belongs to the UPF0161 family.

Its subcellular location is the cell membrane. In terms of biological role, could be involved in insertion of integral membrane proteins into the membrane. The protein is Putative membrane protein insertion efficiency factor of Clavibacter michiganensis subsp. michiganensis (strain NCPPB 382).